Consider the following 149-residue polypeptide: Large ribosomal subunit protein uL15 (149 aa).

The segment covering 1–12 (MSEPIKLHDLRP) has biased composition (basic and acidic residues). Residues 1 to 55 (MSEPIKLHDLRPAKGANKPKTRVGRGEASKGKTAGRGTKGTKARKQVSAAFEGGQ) form a disordered region.

This sequence belongs to the universal ribosomal protein uL15 family. In terms of assembly, part of the 50S ribosomal subunit.

In terms of biological role, binds to the 23S rRNA. The protein is Large ribosomal subunit protein uL15 of Corynebacterium kroppenstedtii (strain DSM 44385 / JCM 11950 / CIP 105744 / CCUG 35717).